We begin with the raw amino-acid sequence, 1501 residues long: Neither inactivation nor afterpotential protein C (1501 aa).

In terms of domain architecture, Protein kinase spans 16–282; the sequence is FEIYEEIAQG…MVEMVEHPFL (267 aa). ATP-binding positions include 22–30 and Lys45; that span reads IAQGVNAKV. Residue Asp145 is the Proton acceptor of the active site. A Phosphoserine modification is found at Ser183. The Myosin motor domain maps to 332–1037; it reads MYPEDLAALE…FLARLYELQV (706 aa). Residues 913–934 form an actin-binding region; the sequence is LTLLKMLSQNANLGVHFVRCIR. 2 IQ domains span residues 1036-1065 and 1072-1101; these read QVKKVIKVQSMMRALLARKRVKGGKVFKLG and HDVAASKIQKAFRGFRDRVRLPPLVNEKSG. An interaction with rtp region spans residues 1043–1271; the sequence is VQSMMRALLA…RMGESDNIYN (229 aa). The interval 1066-1501 is non alpha-helical, C-terminal domain; that stretch reads KKGPEHHDVA…ITLSGYAVDI (436 aa). Disordered regions lie at residues 1308–1364 and 1390–1473; these read NWGV…DPVR and KTNY…EDSN. Residues 1326–1335 show a composition bias toward pro residues; that stretch reads APPPPPPPMP. Residues 1336–1358 are compositionally biased toward low complexity; the sequence is SSNYYRNNPNQQQRNYQQRSSYP. The segment covering 1405-1414 has biased composition (basic and acidic residues); that stretch reads NNRRGSDSGD. Residues 1449 to 1463 are compositionally biased toward polar residues; sequence FGQQQRAPTLRQSPA.

This sequence in the C-terminal section; belongs to the TRAFAC class myosin-kinesin ATPase superfamily. Myosin family. The protein in the N-terminal section; belongs to the protein kinase superfamily. Ser/Thr protein kinase family. As to quaternary structure, interacts with rtp. In terms of tissue distribution, expressed in the phototransducing compartment of photoreceptor cells, the rhabdomeres (at protein level).

Its subcellular location is the cytoplasm. The protein resides in the cytoskeleton. The protein localises to the nucleus. It localises to the membrane. It is found in the cell projection. Its subcellular location is the rhabdomere membrane. It carries out the reaction L-seryl-[protein] + ATP = O-phospho-L-seryl-[protein] + ADP + H(+). The enzyme catalyses L-threonyl-[protein] + ATP = O-phospho-L-threonyl-[protein] + ADP + H(+). Its function is as follows. Required for photoreceptor cell function. The ninaC proteins combines putative serine/threonine-protein kinase and myosin activities. Essential for the expression and stability of the rtp protein in the photoreceptors. The rtp/ninaC complex is required for stability of inad and inac and the normal termination of phototransduction in the retina. The protein is Neither inactivation nor afterpotential protein C (ninaC) of Drosophila melanogaster (Fruit fly).